A 492-amino-acid polypeptide reads, in one-letter code: Gamma-aminobutyric acid receptor subunit alpha-3 (492 aa).

The first 28 residues, methionine 1 to glycine 28, serve as a signal peptide directing secretion. The interval glycine 28 to proline 54 is disordered. Topologically, residues glutamine 29–lysine 274 are extracellular. Positions glutamate 31 to lysine 42 are enriched in basic and acidic residues. Residue asparagine 63 is glycosylated (N-linked (GlcNAc...) asparagine). Arginine 119 serves as a coordination point for 4-aminobutanoate. N-linked (GlcNAc...) asparagine glycans are attached at residues asparagine 163 and asparagine 176. Threonine 182 provides a ligand contact to 4-aminobutanoate. The cysteines at positions 191 and 205 are disulfide-linked. An N-linked (GlcNAc...) asparagine glycan is attached at asparagine 228. Residues isoleucine 275 to valine 295 form a helical membrane-spanning segment. Residues serine 296 to proline 305 are Cytoplasmic-facing. The helical transmembrane segment at alanine 306 to alanine 325 threads the bilayer. The Extracellular segment spans residues arginine 326–threonine 336. Residues alanine 337–alanine 357 form a helical membrane-spanning segment. At threonine 358 to lysine 457 the chain is on the cytoplasmic side. Position 426 is a phosphoserine (serine 426). Threonine 427 is subject to Phosphothreonine. A phosphoserine mark is found at serine 433 and serine 442. The helical transmembrane segment at isoleucine 458 to tyrosine 478 threads the bilayer. The Extracellular portion of the chain corresponds to valine 479–glutamine 492.

Belongs to the ligand-gated ion channel (TC 1.A.9) family. Gamma-aminobutyric acid receptor (TC 1.A.9.5) subfamily. GABRA3 sub-subfamily. In terms of assembly, heteropentamer, formed by a combination of alpha (GABRA1-6), beta (GABRB1-3), gamma (GABRG1-3), delta (GABRD), epsilon (GABRE), rho (GABRR1-3), pi (GABRP) and theta (GABRQ) chains, each subunit exhibiting distinct physiological and pharmacological properties. Binds UBQLN1. Interacts with GPHN.

The protein localises to the postsynaptic cell membrane. Its subcellular location is the cell membrane. It catalyses the reaction chloride(in) = chloride(out). Its activity is regulated as follows. Potentiated by etomidate, propofol, pregnanolone and flurazepam. Functionally, alpha subunit of the heteropentameric ligand-gated chloride channel gated by gamma-aminobutyric acid (GABA), a major inhibitory neurotransmitter in the brain. GABA-gated chloride channels, also named GABA(A) receptors (GABAAR), consist of five subunits arranged around a central pore and contain GABA active binding site(s) located at the alpha and beta subunit interface(s). When activated by GABA, GABAARs selectively allow the flow of chloride anions across the cell membrane down their electrochemical gradient. Chloride influx into the postsynaptic neuron following GABAAR opening decreases the neuron ability to generate a new action potential, thereby reducing nerve transmission. This Homo sapiens (Human) protein is Gamma-aminobutyric acid receptor subunit alpha-3.